We begin with the raw amino-acid sequence, 178 residues long: Tetratricopeptide repeat protein 9C (178 aa).

TPR repeat units follow at residues 15–48, 79–114, and 115–148; these read ASSFKSQGNKCYTEHRMRQAVSLYHKALLQLRSL, ADCYNNLAACLLQSQPPRYQRVYECSLQVLSLQPEN, and VKALYRAGVSSYHLKDYTNAHHYLSQAASRAPKD.

It belongs to the TTC9 family.

The polypeptide is Tetratricopeptide repeat protein 9C (ttc9c) (Xenopus tropicalis (Western clawed frog)).